The following is a 428-amino-acid chain: Lipoamide acyltransferase component of branched-chain alpha-keto acid dehydrogenase complex (428 aa).

One can recognise a Lipoyl-binding domain in the interval 3-78 (THVIKMPDIG…AVGGELIRLE (76 aa)). Residue K44 is modified to N6-lipoyllysine. Residues 88-145 (SPAAATPAAPVAATPEKPKEAPVAAPKAAAEAPRALRDSEAPRQRRQPGERPLASPAV) form a disordered region. Low complexity predominate over residues 89–120 (PAAATPAAPVAATPEKPKEAPVAAPKAAAEAP). Residues 121–136 (RALRDSEAPRQRRQPG) show a composition bias toward basic and acidic residues. The Peripheral subunit-binding (PSBD) domain maps to 140–177 (LASPAVRQRARDLGIELQFVQGSGPAGRVLHEDLDAYL). Catalysis depends on residues H400 and D404.

The protein belongs to the 2-oxoacid dehydrogenase family. Forms a 24-polypeptide structural core with octahedral symmetry. It depends on (R)-lipoate as a cofactor.

It carries out the reaction N(6)-[(R)-dihydrolipoyl]-L-lysyl-[protein] + 2-methylpropanoyl-CoA = N(6)-[(R)-S(8)-2-methylpropanoyldihydrolipoyl]-L-lysyl-[protein] + CoA. The branched-chain alpha-keto dehydrogenase complex catalyzes the overall conversion of alpha-keto acids to acyl-CoA and CO(2). It contains multiple copies of three enzymatic components: branched-chain alpha-keto acid decarboxylase (E1), lipoamide acyltransferase (E2) and lipoamide dehydrogenase (E3). The polypeptide is Lipoamide acyltransferase component of branched-chain alpha-keto acid dehydrogenase complex (bkdB) (Pseudomonas aeruginosa (strain ATCC 15692 / DSM 22644 / CIP 104116 / JCM 14847 / LMG 12228 / 1C / PRS 101 / PAO1)).